The sequence spans 271 residues: Non-homologous end joining protein Ku (271 aa).

Residues 12 to 194 form the Ku domain; the sequence is KLSLVTCPVV…DQKPVPELLS (183 aa). The segment at 225–249 is disordered; that stretch reads EAKKTPPAKKTKAEEKTGKGSAESN.

Belongs to the prokaryotic Ku family. In terms of assembly, homodimer. Interacts with LigD.

Functionally, with LigD forms a non-homologous end joining (NHEJ) DNA repair enzyme, which repairs dsDNA breaks with reduced fidelity. Binds linear dsDNA with 5'- and 3'- overhangs but not closed circular dsDNA nor ssDNA. Recruits and stimulates the ligase activity of LigD. This Methylocella silvestris (strain DSM 15510 / CIP 108128 / LMG 27833 / NCIMB 13906 / BL2) protein is Non-homologous end joining protein Ku.